The sequence spans 584 residues: 2-succinyl-5-enolpyruvyl-6-hydroxy-3-cyclohexene-1-carboxylate synthase (584 aa).

This sequence belongs to the TPP enzyme family. MenD subfamily. As to quaternary structure, homodimer. Mg(2+) serves as cofactor. It depends on Mn(2+) as a cofactor. Requires thiamine diphosphate as cofactor.

The enzyme catalyses isochorismate + 2-oxoglutarate + H(+) = 5-enolpyruvoyl-6-hydroxy-2-succinyl-cyclohex-3-ene-1-carboxylate + CO2. The protein operates within quinol/quinone metabolism; 1,4-dihydroxy-2-naphthoate biosynthesis; 1,4-dihydroxy-2-naphthoate from chorismate: step 2/7. It functions in the pathway quinol/quinone metabolism; menaquinone biosynthesis. Catalyzes the thiamine diphosphate-dependent decarboxylation of 2-oxoglutarate and the subsequent addition of the resulting succinic semialdehyde-thiamine pyrophosphate anion to isochorismate to yield 2-succinyl-5-enolpyruvyl-6-hydroxy-3-cyclohexene-1-carboxylate (SEPHCHC). This chain is 2-succinyl-5-enolpyruvyl-6-hydroxy-3-cyclohexene-1-carboxylate synthase, found in Bacillus thuringiensis (strain Al Hakam).